The chain runs to 88 residues: Large ribosomal subunit protein bL27 (88 aa).

It belongs to the bacterial ribosomal protein bL27 family.

The chain is Large ribosomal subunit protein bL27 from Mycolicibacterium smegmatis (strain ATCC 700084 / mc(2)155) (Mycobacterium smegmatis).